The following is a 219-amino-acid chain: Probable 3-beta-hydroxysteroid-Delta(8),Delta(7)-isomerase (219 aa).

Helical transmembrane passes span 29–49 (ILVPYLATSLFLLLAVWLISG), 62–82 (LMCWWAFTGLTHIIIEGTFVF), 119–139 (VEGITAVLEGPASLLAVYAIA), and 181–201 (FWAYFIGANSSWVVIPTMIAI). Residues 58–200 (TDRWLMCWWA…SWVVIPTMIA (143 aa)) enclose the EXPERA domain.

It belongs to the EBP family.

The protein resides in the endoplasmic reticulum membrane. The catalysed reaction is lathosterol = 5alpha-cholest-8-en-3beta-ol. It participates in steroid biosynthesis; sterol biosynthesis. In terms of biological role, catalyzes the conversion of Delta(8)-sterols to their corresponding Delta(7)-isomers. This chain is Probable 3-beta-hydroxysteroid-Delta(8),Delta(7)-isomerase, found in Oryza sativa subsp. japonica (Rice).